A 732-amino-acid chain; its full sequence is uncharacterized protein (732 aa).

Disordered regions lie at residues 38 to 90 (TTLA…NNNK) and 226 to 629 (EESP…MDYQ). A compositionally biased stretch (low complexity) spans 47-56 (QQQQQQQQQQ). Polar residues predominate over residues 57–76 (PPSSSTTKEGGATTTQDNKL). 3 stretches are compositionally biased toward low complexity: residues 77-89 (TANG…NNNN), 231-247 (TTTT…TTAA), and 254-318 (TTTT…GTNS). Over residues 327–338 (KAKKGVPKKAPT) the composition is skewed to basic residues. Low complexity-rich tracts occupy residues 339 to 383 (KKQP…APKT), 401 to 421 (KTSK…STTK), and 487 to 523 (SAST…IKSK). The segment covering 553–566 (AAAEEQEEEEEEDN) has biased composition (acidic residues). Low complexity-rich tracts occupy residues 567-577 (SNGIQNNNSSN) and 593-609 (DNFS…NGLL). Over residues 610 to 621 (SEDDDDDDDDDN) the composition is skewed to acidic residues.

This is an uncharacterized protein from Dictyostelium discoideum (Social amoeba).